Here is a 137-residue protein sequence, read N- to C-terminus: Proofreading thioesterase EntH (137 aa).

Catalysis depends on E63, which acts as the Nucleophile or proton acceptor.

It belongs to the thioesterase PaaI family. As to quaternary structure, homotetramer. Dimer of dimers. Interacts specifically with the aryl carrier protein (ArCP) domain of EntB.

It is found in the cytoplasm. Its pathway is siderophore biosynthesis; enterobactin biosynthesis. Its function is as follows. Required for optimal enterobactin synthesis. Acts as a proofreading enzyme that prevents EntB misacylation by hydrolyzing the thioester bound existing between EntB and wrongly charged molecules. In Citrobacter koseri (strain ATCC BAA-895 / CDC 4225-83 / SGSC4696), this protein is Proofreading thioesterase EntH.